Here is a 307-residue protein sequence, read N- to C-terminus: Olfactory receptor 13G1 (307 aa).

The Extracellular portion of the chain corresponds to 1–22 (MNHSVVTEFIILGLTKKPELQG). Asn2 is a glycosylation site (N-linked (GlcNAc...) asparagine). The chain crosses the membrane as a helical span at residues 23–43 (IIFLFFLIVYLVAFLGNMLII). Residues 44–51 (IAKIYNNT) lie on the Cytoplasmic side of the membrane. Residues 52–72 (LHTPMYVFLLTLAVVDIICTT) form a helical membrane-spanning segment. The Extracellular portion of the chain corresponds to 73–96 (SIIPKMLGTMLTSENTISYAGCMS). Cys94 and Cys186 are joined by a disulfide. Residues 97–117 (QLFLFTWSLGAEMVLFTTMAY) form a helical membrane-spanning segment. The Cytoplasmic portion of the chain corresponds to 118–136 (DRYVAICFPLHYSTIMNHH). The helical transmembrane segment at 137 to 157 (MCVALLSMVMAIAVTNSWVHT) threads the bilayer. Residues 158 to 194 (ALIMRLTFCGPNTIDHFFCEIPPLLALSCSPVRINEV) lie on the Extracellular side of the membrane. The helical transmembrane segment at 195–214 (MVYVADITLAIGDFILTCIS) threads the bilayer. Residues 215–234 (YGFIIVAILRIRTVEGKRKA) lie on the Cytoplasmic side of the membrane. Residues 235-255 (FSTCSSHLTVVTLYYSPVIYT) traverse the membrane as a helical segment. Residues 256-268 (YIRPASSYTFERD) lie on the Extracellular side of the membrane. A helical transmembrane segment spans residues 269–289 (KVVAALYTLVTPTLNPMVYSF). Over 290–307 (QNREMQAGIRKVFAFLKH) the chain is Cytoplasmic.

It belongs to the G-protein coupled receptor 1 family.

It localises to the cell membrane. Its function is as follows. Odorant receptor. The protein is Olfactory receptor 13G1 (OR13G1) of Homo sapiens (Human).